The chain runs to 244 residues: tRNA pseudouridine synthase A (244 aa).

Aspartate 52 (nucleophile) is an active-site residue. Substrate is bound at residue tyrosine 110.

Belongs to the tRNA pseudouridine synthase TruA family. As to quaternary structure, homodimer.

It catalyses the reaction uridine(38/39/40) in tRNA = pseudouridine(38/39/40) in tRNA. Its function is as follows. Formation of pseudouridine at positions 38, 39 and 40 in the anticodon stem and loop of transfer RNAs. The chain is tRNA pseudouridine synthase A from Clostridium kluyveri (strain ATCC 8527 / DSM 555 / NBRC 12016 / NCIMB 10680 / K1).